Reading from the N-terminus, the 1199-residue chain is Major DNA-binding protein (1199 aa).

The disordered stretch occupies residues 289–314; it reads SGTTTARGARRNDVNSTSKPSPSGGF. Residues 497–510 fold into a zinc finger; sequence CSLCEKHTRPVCAH. 2 consecutive short sequence motifs (required for filament formation) follow at residues 841–842 and 1146–1148; these read FW and FNF. Residues 1172-1199 are required for nuclear localization; it reads LKRPPEDDELFDLSGIPIKHGNITMEMI.

This sequence belongs to the herpesviridae major DNA-binding protein family. Homooligomers. Forms double-helical filaments necessary for the formation of replication compartments within the host nucleus. Interacts with the origin-binding protein. Interacts with the helicase primase complex; this interaction stimulates primer synthesis activity of the helicase-primase complex. Interacts with the DNA polymerase. Interacts with the alkaline exonuclease; this interaction increases its nuclease processivity.

The protein resides in the host nucleus. In terms of biological role, plays several crucial roles in viral infection. Participates in the opening of the viral DNA origin to initiate replication by interacting with the origin-binding protein. May disrupt loops, hairpins and other secondary structures present on ssDNA to reduce and eliminate pausing of viral DNA polymerase at specific sites during elongation. Promotes viral DNA recombination by performing strand-transfer, characterized by the ability to transfer a DNA strand from a linear duplex to a complementary single-stranded DNA circle. Can also catalyze the renaturation of complementary single strands. Additionally, reorganizes the host cell nucleus, leading to the formation of prereplicative sites and replication compartments. This process is driven by the protein which can form double-helical filaments in the absence of DNA. In Varicella-zoster virus (strain Oka vaccine) (HHV-3), this protein is Major DNA-binding protein.